A 156-amino-acid chain; its full sequence is Putative NrdI-like protein (156 aa).

The protein belongs to the NrdI family.

This is Putative NrdI-like protein from Streptococcus pneumoniae serotype 4 (strain ATCC BAA-334 / TIGR4).